We begin with the raw amino-acid sequence, 169 residues long: MEVYIPSFRYEESDLERGYTVFKIEVLMNGRKHFVEKRYSEFHALHKKLKKCIKTPEIPSKHVRNWVPKVLEQRRQGLETYLQAVILENEELPKLFLDFLNVRHLPSLPKTESYGSFDETESEESSKLSHQPVLLFLRDPYVLPAASDFPNVVIEGVLHGIFYPHLQPR.

N-acetylmethionine is present on M1. The PX domain maps to 1-125; it reads MEVYIPSFRY…SFDETESEES (125 aa). The a 1,2-diacyl-sn-glycero-3-phospho-(1D-myo-inositol-3-phosphate) site is built by R38, S40, K61, and R74. Phosphoserine is present on residues S113 and S116.

The protein belongs to the sorting nexin family.

It is found in the cytoplasmic vesicle membrane. In terms of biological role, may be involved in several stages of intracellular trafficking. The polypeptide is Sorting nexin-24 (SNX24) (Bos taurus (Bovine)).